Reading from the N-terminus, the 474-residue chain is Magnesium transporter MRS2-A, chloroplastic (474 aa).

The N-terminal 55 residues, 1 to 55 (MASVSSSPSYSSQAAVLLLLHQPPHQHGHGGACLRYRGSQSQGRGNAVATSLGLS), are a transit peptide targeting the chloroplast. Residues 79 to 129 (GKDGRAVTKDEEEEAAAAAVEEEGEVEVRREEDKPGDDGSREAAARGSGSG) are disordered. The segment covering 88 to 103 (DEEEEAAAAAVEEEGE) has biased composition (acidic residues). Basic and acidic residues predominate over residues 104 to 122 (VEVRREEDKPGDDGSREAA). Transmembrane regions (helical) follow at residues 412–432 (LLLQVGTFCVAIGALIAGIFG) and 444–464 (WAFWATTGGIVVGAVAGFFIM). A Required for magnesium transport activity motif is present at residues 432–434 (GMN).

The protein belongs to the CorA metal ion transporter (MIT) (TC 1.A.35.5) family.

It is found in the plastid. The protein resides in the chloroplast membrane. Its function is as follows. Magnesium transporter that may mediate the influx of magnesium in chloroplast. The sequence is that of Magnesium transporter MRS2-A, chloroplastic (MRS2-A) from Oryza sativa subsp. japonica (Rice).